A 221-amino-acid chain; its full sequence is Ethylene-inducing xylanase 4 (221 aa).

An N-terminal signal peptide occupies residues 1–19 (MVSFSTLLTACTAITGALG). Residues 28 to 218 (NVTPNAQGTH…SAGRASVVVE (191 aa)) enclose the GH11 domain. N-linked (GlcNAc...) asparagine glycosylation is present at Asn-96. Glu-114 (nucleophile) is an active-site residue. The Proton donor role is filled by Glu-205.

This sequence belongs to the glycosyl hydrolase 11 (cellulase G) family.

The enzyme catalyses Endohydrolysis of (1-&gt;4)-beta-D-xylosidic linkages in xylans.. It participates in glycan degradation; xylan degradation. Functionally, endo-1,4-beta-xylanase involved in the hydrolysis of xylan, a major structural heterogeneous polysaccharide found in plant biomass representing the second most abundant polysaccharide in the biosphere, after cellulose. May act as an elicitor of plant defense responses in certain plants but does not exhibit any cell death when transiently expressed in N.benthamiana. The protein is Ethylene-inducing xylanase 4 of Verticillium dahliae (strain VdLs.17 / ATCC MYA-4575 / FGSC 10137) (Verticillium wilt).